A 310-amino-acid polypeptide reads, in one-letter code: Ornithine carbamoyltransferase (310 aa).

Carbamoyl phosphate is bound by residues serine 57 to threonine 60, glutamine 84, arginine 108, and histidine 135 to glutamine 138. L-ornithine is bound by residues asparagine 166, aspartate 229, and serine 233–methionine 234. Carbamoyl phosphate contacts are provided by residues cysteine 269–leucine 270 and arginine 297.

The protein belongs to the aspartate/ornithine carbamoyltransferase superfamily. OTCase family.

Its subcellular location is the cytoplasm. It carries out the reaction carbamoyl phosphate + L-ornithine = L-citrulline + phosphate + H(+). The protein operates within amino-acid biosynthesis; L-arginine biosynthesis; L-arginine from L-ornithine and carbamoyl phosphate: step 1/3. Functionally, reversibly catalyzes the transfer of the carbamoyl group from carbamoyl phosphate (CP) to the N(epsilon) atom of ornithine (ORN) to produce L-citrulline. This chain is Ornithine carbamoyltransferase, found in Thermosynechococcus vestitus (strain NIES-2133 / IAM M-273 / BP-1).